A 163-amino-acid polypeptide reads, in one-letter code: Phosphopantetheine adenylyltransferase (163 aa).

Ser8 serves as a coordination point for substrate. ATP contacts are provided by residues 8–9 (SF) and His16. Residues Lys40, Thr72, and Arg86 each coordinate substrate. Residues 87-89 (GLR), Glu97, and 122-128 (HSFLSSS) contribute to the ATP site.

It belongs to the bacterial CoaD family. In terms of assembly, homohexamer. The cofactor is Mg(2+).

The protein resides in the cytoplasm. It catalyses the reaction (R)-4'-phosphopantetheine + ATP + H(+) = 3'-dephospho-CoA + diphosphate. Its pathway is cofactor biosynthesis; coenzyme A biosynthesis; CoA from (R)-pantothenate: step 4/5. Reversibly transfers an adenylyl group from ATP to 4'-phosphopantetheine, yielding dephospho-CoA (dPCoA) and pyrophosphate. This is Phosphopantetheine adenylyltransferase from Parasynechococcus marenigrum (strain WH8102).